The following is a 936-amino-acid chain: Protein translocase subunit SecA (936 aa).

ATP is bound by residues Q87, 105-109, and D515; that span reads GEGKT. Positions 920, 922, 931, and 932 each coordinate Zn(2+).

The protein belongs to the SecA family. As to quaternary structure, monomer and homodimer. Part of the essential Sec protein translocation apparatus which comprises SecA, SecYEG and auxiliary proteins SecDF-YajC and YidC. It depends on Zn(2+) as a cofactor.

It is found in the cell inner membrane. Its subcellular location is the cytoplasm. The enzyme catalyses ATP + H2O + cellular proteinSide 1 = ADP + phosphate + cellular proteinSide 2.. Functionally, part of the Sec protein translocase complex. Interacts with the SecYEG preprotein conducting channel. Has a central role in coupling the hydrolysis of ATP to the transfer of proteins into and across the cell membrane, serving both as a receptor for the preprotein-SecB complex and as an ATP-driven molecular motor driving the stepwise translocation of polypeptide chains across the membrane. The chain is Protein translocase subunit SecA from Paraburkholderia xenovorans (strain LB400).